A 201-amino-acid polypeptide reads, in one-letter code: Peptidyl-tRNA hydrolase (201 aa).

Y15 serves as a coordination point for tRNA. H20 (proton acceptor) is an active-site residue. Residues Y66, N68, and N114 each coordinate tRNA.

It belongs to the PTH family. Monomer.

It is found in the cytoplasm. It catalyses the reaction an N-acyl-L-alpha-aminoacyl-tRNA + H2O = an N-acyl-L-amino acid + a tRNA + H(+). Its function is as follows. Hydrolyzes ribosome-free peptidyl-tRNAs (with 1 or more amino acids incorporated), which drop off the ribosome during protein synthesis, or as a result of ribosome stalling. In terms of biological role, catalyzes the release of premature peptidyl moieties from peptidyl-tRNA molecules trapped in stalled 50S ribosomal subunits, and thus maintains levels of free tRNAs and 50S ribosomes. This chain is Peptidyl-tRNA hydrolase, found in Burkholderia mallei (strain NCTC 10247).